Here is a 545-residue protein sequence, read N- to C-terminus: CTP synthase (545 aa).

The segment at 1-266 is amidoligase domain; the sequence is MTTRYIFVTG…DDLVIKRFNL (266 aa). S14 is a binding site for CTP. UTP is bound at residue S14. Residues 15–20 and D72 each bind ATP; that span reads SLGKGI. Mg(2+) is bound by residues D72 and E140. CTP-binding positions include 147–149, 187–192, and K223; these read DIE and KTKPTQ. Residues 187-192 and K223 each bind UTP; that span reads KTKPTQ. 239–241 lines the ATP pocket; it reads KDV. The Glutamine amidotransferase type-1 domain maps to 291–542; the sequence is TIGMVGKYIE…IAASYAYQKR (252 aa). L-glutamine is bound at residue G352. The active-site Nucleophile; for glutamine hydrolysis is C379. Residues 380-383, E403, and R470 contribute to the L-glutamine site; that span reads LGMQ. Catalysis depends on residues H515 and E517.

This sequence belongs to the CTP synthase family. In terms of assembly, homotetramer.

The enzyme catalyses UTP + L-glutamine + ATP + H2O = CTP + L-glutamate + ADP + phosphate + 2 H(+). It catalyses the reaction L-glutamine + H2O = L-glutamate + NH4(+). It carries out the reaction UTP + NH4(+) + ATP = CTP + ADP + phosphate + 2 H(+). Its pathway is pyrimidine metabolism; CTP biosynthesis via de novo pathway; CTP from UDP: step 2/2. Its activity is regulated as follows. Allosterically activated by GTP, when glutamine is the substrate; GTP has no effect on the reaction when ammonia is the substrate. The allosteric effector GTP functions by stabilizing the protein conformation that binds the tetrahedral intermediate(s) formed during glutamine hydrolysis. Inhibited by the product CTP, via allosteric rather than competitive inhibition. Catalyzes the ATP-dependent amination of UTP to CTP with either L-glutamine or ammonia as the source of nitrogen. Regulates intracellular CTP levels through interactions with the four ribonucleotide triphosphates. The protein is CTP synthase of Shewanella frigidimarina (strain NCIMB 400).